We begin with the raw amino-acid sequence, 425 residues long: Serine--tRNA ligase (425 aa).

233 to 235 (TAE) is a binding site for L-serine. 264-266 (RRE) lines the ATP pocket. E287 serves as a coordination point for L-serine. Residue 351 to 354 (EISS) coordinates ATP. S385 provides a ligand contact to L-serine.

It belongs to the class-II aminoacyl-tRNA synthetase family. Type-1 seryl-tRNA synthetase subfamily. As to quaternary structure, homodimer. The tRNA molecule binds across the dimer.

Its subcellular location is the cytoplasm. The enzyme catalyses tRNA(Ser) + L-serine + ATP = L-seryl-tRNA(Ser) + AMP + diphosphate + H(+). It catalyses the reaction tRNA(Sec) + L-serine + ATP = L-seryl-tRNA(Sec) + AMP + diphosphate + H(+). It participates in aminoacyl-tRNA biosynthesis; selenocysteinyl-tRNA(Sec) biosynthesis; L-seryl-tRNA(Sec) from L-serine and tRNA(Sec): step 1/1. Its function is as follows. Catalyzes the attachment of serine to tRNA(Ser). Is also able to aminoacylate tRNA(Sec) with serine, to form the misacylated tRNA L-seryl-tRNA(Sec), which will be further converted into selenocysteinyl-tRNA(Sec). This is Serine--tRNA ligase from Synechococcus sp. (strain CC9902).